The chain runs to 155 residues: 3-dehydroquinate dehydratase (155 aa).

The active-site Proton acceptor is the tyrosine 32. 3 residues coordinate substrate: asparagine 84, histidine 90, and aspartate 97. Histidine 110 (proton donor) is an active-site residue. Substrate is bound by residues 111–112 (LS) and arginine 121.

Belongs to the type-II 3-dehydroquinase family. Homododecamer.

The enzyme catalyses 3-dehydroquinate = 3-dehydroshikimate + H2O. It functions in the pathway metabolic intermediate biosynthesis; chorismate biosynthesis; chorismate from D-erythrose 4-phosphate and phosphoenolpyruvate: step 3/7. Its function is as follows. Catalyzes a trans-dehydration via an enolate intermediate. In Ralstonia pickettii (strain 12J), this protein is 3-dehydroquinate dehydratase.